Consider the following 388-residue polypeptide: UPF0229 protein BH1031 (388 aa).

Positions 80–117 are disordered; sequence HVGQGDGDSQVGDVIARDPSAGQQGPGKGQGAGDQPGE. Residues 103–113 are compositionally biased toward gly residues; that stretch reads QGPGKGQGAGD.

The protein belongs to the UPF0229 family.

The chain is UPF0229 protein BH1031 from Halalkalibacterium halodurans (strain ATCC BAA-125 / DSM 18197 / FERM 7344 / JCM 9153 / C-125) (Bacillus halodurans).